We begin with the raw amino-acid sequence, 792 residues long: Endonuclease MutS2 (792 aa).

344–351 (GPNTGGKT) lines the ATP pocket. The region spanning 716-791 (IHLRGLHVEE…GLGVTVVYLE (76 aa)) is the Smr domain.

The protein belongs to the DNA mismatch repair MutS family. MutS2 subfamily. In terms of assembly, homodimer. Binds to stalled ribosomes, contacting rRNA.

Its function is as follows. Endonuclease that is involved in the suppression of homologous recombination and thus may have a key role in the control of bacterial genetic diversity. Acts as a ribosome collision sensor, splitting the ribosome into its 2 subunits. Detects stalled/collided 70S ribosomes which it binds and splits by an ATP-hydrolysis driven conformational change. Acts upstream of the ribosome quality control system (RQC), a ribosome-associated complex that mediates the extraction of incompletely synthesized nascent chains from stalled ribosomes and their subsequent degradation. Probably generates substrates for RQC. The chain is Endonuclease MutS2 from Thermomicrobium roseum (strain ATCC 27502 / DSM 5159 / P-2).